A 545-amino-acid chain; its full sequence is Chaperonin GroEL 1 (545 aa).

ATP-binding positions include 29–32, 86–90, Gly413, 479–481, and Asp495; these read TLGP, DGTTT, and DAA. Residues 525–545 form a disordered region; that stretch reads PEPKENNPAGSGAGMGGDFDY. Residues 535 to 545 show a composition bias toward gly residues; that stretch reads SGAGMGGDFDY.

It belongs to the chaperonin (HSP60) family. Forms a cylinder of 14 subunits composed of two heptameric rings stacked back-to-back. Interacts with the co-chaperonin GroES.

The protein localises to the cytoplasm. It carries out the reaction ATP + H2O + a folded polypeptide = ADP + phosphate + an unfolded polypeptide.. Its function is as follows. Together with its co-chaperonin GroES, plays an essential role in assisting protein folding. The GroEL-GroES system forms a nano-cage that allows encapsulation of the non-native substrate proteins and provides a physical environment optimized to promote and accelerate protein folding. The polypeptide is Chaperonin GroEL 1 (Thermosynechococcus vestitus (strain NIES-2133 / IAM M-273 / BP-1)).